The primary structure comprises 378 residues: Chaperone protein DnaJ (378 aa).

The region spanning 5-70 (DFYEILGVSK…EKRSAYDRMG (66 aa)) is the J domain. The CR-type zinc-finger motif lies at 137-215 (GCKKEISFTA…CHGNGVKDKS (79 aa)). Residues Cys150, Cys153, Cys167, Cys170, Cys189, Cys192, Cys203, and Cys206 each contribute to the Zn(2+) site. CXXCXGXG motif repeat units follow at residues 150-157 (CDTCDGKG), 167-174 (CQTCHGQG), 189-196 (CPHCGGTG), and 203-210 (CSDCHGNG).

Belongs to the DnaJ family. As to quaternary structure, homodimer. Zn(2+) serves as cofactor.

It localises to the cytoplasm. Participates actively in the response to hyperosmotic and heat shock by preventing the aggregation of stress-denatured proteins and by disaggregating proteins, also in an autonomous, DnaK-independent fashion. Unfolded proteins bind initially to DnaJ; upon interaction with the DnaJ-bound protein, DnaK hydrolyzes its bound ATP, resulting in the formation of a stable complex. GrpE releases ADP from DnaK; ATP binding to DnaK triggers the release of the substrate protein, thus completing the reaction cycle. Several rounds of ATP-dependent interactions between DnaJ, DnaK and GrpE are required for fully efficient folding. Also involved, together with DnaK and GrpE, in the DNA replication of plasmids through activation of initiation proteins. This chain is Chaperone protein DnaJ, found in Psychrobacter cryohalolentis (strain ATCC BAA-1226 / DSM 17306 / VKM B-2378 / K5).